Here is a 361-residue protein sequence, read N- to C-terminus: Phosphoserine aminotransferase (361 aa).

An L-glutamate-binding site is contributed by Arg43. Residues 77-78 (AS), Trp103, Thr153, Asp173, and Gln196 each bind pyridoxal 5'-phosphate. The residue at position 197 (Lys197) is an N6-(pyridoxal phosphate)lysine. 238 to 239 (NT) serves as a coordination point for pyridoxal 5'-phosphate.

This sequence belongs to the class-V pyridoxal-phosphate-dependent aminotransferase family. SerC subfamily. As to quaternary structure, homodimer. Pyridoxal 5'-phosphate is required as a cofactor.

Its subcellular location is the cytoplasm. The enzyme catalyses O-phospho-L-serine + 2-oxoglutarate = 3-phosphooxypyruvate + L-glutamate. The catalysed reaction is 4-(phosphooxy)-L-threonine + 2-oxoglutarate = (R)-3-hydroxy-2-oxo-4-phosphooxybutanoate + L-glutamate. The protein operates within amino-acid biosynthesis; L-serine biosynthesis; L-serine from 3-phospho-D-glycerate: step 2/3. Its pathway is cofactor biosynthesis; pyridoxine 5'-phosphate biosynthesis; pyridoxine 5'-phosphate from D-erythrose 4-phosphate: step 3/5. In terms of biological role, catalyzes the reversible conversion of 3-phosphohydroxypyruvate to phosphoserine and of 3-hydroxy-2-oxo-4-phosphonooxybutanoate to phosphohydroxythreonine. The polypeptide is Phosphoserine aminotransferase (Pseudomonas putida (strain ATCC 47054 / DSM 6125 / CFBP 8728 / NCIMB 11950 / KT2440)).